Reading from the N-terminus, the 259-residue chain is Ribosomal RNA small subunit methyltransferase A (259 aa).

Residues asparagine 13, leucine 15, glycine 39, glutamate 60, aspartate 84, and asparagine 101 each contribute to the S-adenosyl-L-methionine site.

The protein belongs to the class I-like SAM-binding methyltransferase superfamily. rRNA adenine N(6)-methyltransferase family. RsmA subfamily.

The protein resides in the cytoplasm. It catalyses the reaction adenosine(1518)/adenosine(1519) in 16S rRNA + 4 S-adenosyl-L-methionine = N(6)-dimethyladenosine(1518)/N(6)-dimethyladenosine(1519) in 16S rRNA + 4 S-adenosyl-L-homocysteine + 4 H(+). Functionally, specifically dimethylates two adjacent adenosines (A1518 and A1519) in the loop of a conserved hairpin near the 3'-end of 16S rRNA in the 30S particle. May play a critical role in biogenesis of 30S subunits. This chain is Ribosomal RNA small subunit methyltransferase A, found in Mesomycoplasma hyopneumoniae (strain J / ATCC 25934 / NCTC 10110) (Mycoplasma hyopneumoniae).